A 65-amino-acid chain; its full sequence is uncharacterized protein (65 aa).

This is an uncharacterized protein from Escherichia coli (Bacteriophage T4).